Here is a 102-residue protein sequence, read N- to C-terminus: Large ribosomal subunit protein bL21 (102 aa).

Belongs to the bacterial ribosomal protein bL21 family. In terms of assembly, part of the 50S ribosomal subunit. Contacts protein L20.

Its function is as follows. This protein binds to 23S rRNA in the presence of protein L20. The sequence is that of Large ribosomal subunit protein bL21 from Phytoplasma australiense.